The primary structure comprises 337 residues: Phenylalanine--tRNA ligase alpha subunit (337 aa).

Position 258 (E258) interacts with Mg(2+).

Belongs to the class-II aminoacyl-tRNA synthetase family. Phe-tRNA synthetase alpha subunit type 1 subfamily. In terms of assembly, tetramer of two alpha and two beta subunits. Requires Mg(2+) as cofactor.

It localises to the cytoplasm. The enzyme catalyses tRNA(Phe) + L-phenylalanine + ATP = L-phenylalanyl-tRNA(Phe) + AMP + diphosphate + H(+). The protein is Phenylalanine--tRNA ligase alpha subunit of Burkholderia vietnamiensis (strain G4 / LMG 22486) (Burkholderia cepacia (strain R1808)).